A 188-amino-acid polypeptide reads, in one-letter code: Ubiquitin-like protein 4B (188 aa).

Residues 1–76 (MFLTVKLLLG…INVIMRPPED (76 aa)) enclose the Ubiquitin-like domain. Residues 146 to 188 (EEKEAPAVASELEQNNGGGGGGGGTGGEGGGKKEEEEGEEADQ) are disordered. Residues 161–174 (NGGGGGGGGTGGEG) are compositionally biased toward gly residues.

In terms of tissue distribution, expressed specifically in post-meiotic male germ cells of the testis. Abundantly expressed in stage 14-16 spermatids.

The protein localises to the cytoplasm. This Mus musculus (Mouse) protein is Ubiquitin-like protein 4B (Ubl4b).